Reading from the N-terminus, the 366-residue chain is 5-hydroxytryptamine receptor 1F (366 aa).

Over 1–24 the chain is Extracellular; the sequence is MDFLNASDQNLTSEELLNRMPSKI. Residues asparagine 5 and asparagine 10 are each glycosylated (N-linked (GlcNAc...) asparagine). The helical transmembrane segment at 25–49 threads the bilayer; that stretch reads LVSLTLSGLALMTTTINSLVIAAII. Over 50-59 the chain is Cytoplasmic; the sequence is VTRKLHHPAN. A helical membrane pass occupies residues 60–81; it reads YLICSLAVTDFLVAVLVMPFSI. Over 82-96 the chain is Extracellular; the sequence is VYIVRESWIMGQVLC. An intrachain disulfide couples cysteine 96 to cysteine 172. Residues 97 to 119 form a helical membrane-spanning segment; that stretch reads DIWLSVDIICCTCSILHLSAIAL. Aspartate 103 and cysteine 107 together coordinate serotonin. The DRY motif; important for ligand-induced conformation changes signature appears at 120–122; sequence DRY. The Cytoplasmic segment spans residues 120–139; it reads DRYRAITDAVEYARKRTPRH. Residues 140–159 form a helical membrane-spanning segment; that stretch reads AGIMITIVWVISVFISMPPL. The Extracellular segment spans residues 160–178; sequence FWRHQGTSRDDECVIKHDH. The helical transmembrane segment at 179–202 threads the bilayer; sequence IVSTIYSTFGAFYIPLVLILILYY. The Cytoplasmic segment spans residues 203–291; the sequence is KIYRAARTLY…KISGTRERKA (89 aa). A helical transmembrane segment spans residues 292–315; that stretch reads ATTLGLILGAFVICWLPFFVKELV. Topologically, residues 316 to 327 are extracellular; that stretch reads VNVCEKCKISEE. Residues 328–350 traverse the membrane as a helical segment; sequence MSNFLAWLGYLNSLINPLIYTIF. Positions 343–347 match the NPxxY motif; important for ligand-induced conformation changes and signaling motif; sequence NPLIY. The Cytoplasmic segment spans residues 351 to 366; that stretch reads NEDFKKAFQKLVRCRY.

Belongs to the G-protein coupled receptor 1 family. Detected in hippocampus.

It localises to the cell membrane. Functionally, G-protein coupled receptor for 5-hydroxytryptamine (serotonin). Also functions as a receptor for various alkaloids and psychoactive substances. Ligand binding causes a conformation change that triggers signaling via guanine nucleotide-binding proteins (G proteins) and modulates the activity of downstream effectors, such as adenylate cyclase. HTR1F is coupled to G(i)/G(o) G alpha proteins and mediates inhibitory neurotransmission by inhibiting adenylate cyclase activity. This is 5-hydroxytryptamine receptor 1F (Htr1f) from Mus musculus (Mouse).